A 105-amino-acid polypeptide reads, in one-letter code: V-type ATP synthase subunit F (105 aa).

Belongs to the V-ATPase F subunit family.

In terms of biological role, produces ATP from ADP in the presence of a proton gradient across the membrane. In Clostridium perfringens (strain 13 / Type A), this protein is V-type ATP synthase subunit F.